The following is a 240-amino-acid chain: Ribosomal RNA large subunit methyltransferase E (240 aa).

Gly residues predominate over residues 1 to 20 (MSKAGGNKGGSRTGGRGGAG). The interval 1 to 33 (MSKAGGNKGGSRTGGRGGAGSSNLHVRVKKKAG) is disordered. Positions 92, 94, 115, 131, and 155 each coordinate S-adenosyl-L-methionine. The active-site Proton acceptor is lysine 195.

It belongs to the class I-like SAM-binding methyltransferase superfamily. RNA methyltransferase RlmE family.

The protein resides in the cytoplasm. The catalysed reaction is uridine(2552) in 23S rRNA + S-adenosyl-L-methionine = 2'-O-methyluridine(2552) in 23S rRNA + S-adenosyl-L-homocysteine + H(+). In terms of biological role, specifically methylates the uridine in position 2552 of 23S rRNA at the 2'-O position of the ribose in the fully assembled 50S ribosomal subunit. This chain is Ribosomal RNA large subunit methyltransferase E, found in Brucella abortus (strain S19).